The primary structure comprises 352 residues: Protein RecA (352 aa).

68–75 is an ATP binding site; it reads GPESSGKT.

The protein belongs to the RecA family.

It is found in the cytoplasm. Its function is as follows. Can catalyze the hydrolysis of ATP in the presence of single-stranded DNA, the ATP-dependent uptake of single-stranded DNA by duplex DNA, and the ATP-dependent hybridization of homologous single-stranded DNAs. It interacts with LexA causing its activation and leading to its autocatalytic cleavage. The chain is Protein RecA from Clostridium perfringens (strain ATCC 13124 / DSM 756 / JCM 1290 / NCIMB 6125 / NCTC 8237 / Type A).